A 343-amino-acid polypeptide reads, in one-letter code: Cilia- and flagella-associated protein 36 (343 aa).

Phosphoserine occurs at positions 85 and 147. Residues 147–187 adopt a coiled-coil conformation; that stretch reads SDLEQEEMKILREVLRKSKEEYDQEEERKRKKQSSEAKMEE. Residues 165 to 188 form a disordered region; that stretch reads KEEYDQEEERKRKKQSSEAKMEEL. S201 carries the phosphoserine modification. Composition is skewed to basic and acidic residues over residues 279–293 and 301–323; these read QKRD…DTRT and QKGK…AEEK. The tract at residues 279-323 is disordered; it reads QKRDKLLSMRKDTRTKQIQNTEQKGKPTREAEEMTEKPEMTAEEK.

It belongs to the CFAP36 family. As to quaternary structure, interacts with ARL3.

The protein resides in the nucleus. Its subcellular location is the cytoplasm. It localises to the cell projection. The protein localises to the cilium. It is found in the flagellum. In terms of biological role, may act as an effector for ARL3. This chain is Cilia- and flagella-associated protein 36, found in Mus musculus (Mouse).